The following is a 134-amino-acid chain: 16 kDa beta-galactoside-binding lectin (134 aa).

Position 1 is an N-acetylmethionine (Met-1). Residues 4-134 (GLVVTQLDVQ…DFKVKAIKFS (131 aa)) form the Galectin domain. 69–75 (WGEEDRK) contributes to the a beta-D-galactoside binding site.

As to quaternary structure, homodimer. As to expression, mainly in the liver (adult), mainly in the muscle (embryo).

In terms of biological role, this protein binds beta-galactoside. Its physiological function is not yet known. It may be involved in the regulation of differentiation. The polypeptide is 16 kDa beta-galactoside-binding lectin (Gallus gallus (Chicken)).